Reading from the N-terminus, the 398-residue chain is Acetate kinase (398 aa).

N10 is a Mg(2+) binding site. Position 17 (K17) interacts with ATP. Position 89 (R89) interacts with substrate. The active-site Proton donor/acceptor is D148. Residues 208–212 (HLGNG), 283–285 (DCR), and 331–335 (GIGEN) contribute to the ATP site. Position 385 (E385) interacts with Mg(2+).

Belongs to the acetokinase family. As to quaternary structure, homodimer. The cofactor is Mg(2+). Mn(2+) is required as a cofactor.

Its subcellular location is the cytoplasm. It carries out the reaction acetate + ATP = acetyl phosphate + ADP. It functions in the pathway metabolic intermediate biosynthesis; acetyl-CoA biosynthesis; acetyl-CoA from acetate: step 1/2. Its function is as follows. Catalyzes the formation of acetyl phosphate from acetate and ATP. Can also catalyze the reverse reaction. The polypeptide is Acetate kinase (Histophilus somni (strain 2336) (Haemophilus somnus)).